The sequence spans 125 residues: Fluoride-specific ion channel FluC (125 aa).

The next 4 helical transmembrane spans lie at 5–25 (ILAI…LALW), 37–57 (LAAN…FHLL), 71–91 (GFLG…TMLL), and 97–117 (VALL…WLGI). 2 residues coordinate Na(+): glycine 74 and threonine 77.

This sequence belongs to the fluoride channel Fluc/FEX (TC 1.A.43) family.

It is found in the cell inner membrane. It carries out the reaction fluoride(in) = fluoride(out). Its activity is regulated as follows. Na(+) is not transported, but it plays an essential structural role and its presence is essential for fluoride channel function. In terms of biological role, fluoride-specific ion channel. Important for reducing fluoride concentration in the cell, thus reducing its toxicity. In Variovorax paradoxus (strain S110), this protein is Fluoride-specific ion channel FluC.